The chain runs to 298 residues: uncharacterized protein (298 aa).

The next 10 membrane-spanning stretches (helical) occupy residues 5-25, 36-56, 76-96, 97-117, 124-144, 147-167, 181-201, 216-236, 244-264, and 272-292; these read ILFG…MSAF, MENV…IYPF, VVVG…ISLA, TATA…PLLL, STLI…DPSV, VGPV…LAYI, VILA…FIDI, ILWI…LTYA, IIAP…LYLG, and SSLG…PALL. The 125-residue stretch at 17-141 folds into the EamA 1 domain; the sequence is LCFGIMSAFV…GIVGVVLISD (125 aa). The EamA 2 domain occupies 183 to 288; that stretch reads LAFAFGMSLL…ILCSGLLIAL (106 aa).

This sequence belongs to the EamA transporter family.

The protein resides in the cell membrane. This is an uncharacterized protein from Helicobacter pylori (strain ATCC 700392 / 26695) (Campylobacter pylori).